Reading from the N-terminus, the 197-residue chain is Holliday junction branch migration complex subunit RuvA (197 aa).

The segment at 1-64 is domain I; the sequence is MIGRLSGKLI…EDAHLLYGFA (64 aa). The segment at 65–143 is domain II; the sequence is SKEERQTFRQ…TGGNLTVPGG (79 aa). A flexible linker region spans residues 143–147; sequence GLPFA. The domain III stretch occupies residues 148–197; that stretch reads ATPDEKSDIVNALLALGYNEKEAAAATKSLPADVTVSEGVRLALKSLMKV.

This sequence belongs to the RuvA family. Homotetramer. Forms an RuvA(8)-RuvB(12)-Holliday junction (HJ) complex. HJ DNA is sandwiched between 2 RuvA tetramers; dsDNA enters through RuvA and exits via RuvB. An RuvB hexamer assembles on each DNA strand where it exits the tetramer. Each RuvB hexamer is contacted by two RuvA subunits (via domain III) on 2 adjacent RuvB subunits; this complex drives branch migration. In the full resolvosome a probable DNA-RuvA(4)-RuvB(12)-RuvC(2) complex forms which resolves the HJ.

It localises to the cytoplasm. Functionally, the RuvA-RuvB-RuvC complex processes Holliday junction (HJ) DNA during genetic recombination and DNA repair, while the RuvA-RuvB complex plays an important role in the rescue of blocked DNA replication forks via replication fork reversal (RFR). RuvA specifically binds to HJ cruciform DNA, conferring on it an open structure. The RuvB hexamer acts as an ATP-dependent pump, pulling dsDNA into and through the RuvAB complex. HJ branch migration allows RuvC to scan DNA until it finds its consensus sequence, where it cleaves and resolves the cruciform DNA. This is Holliday junction branch migration complex subunit RuvA from Chromobacterium violaceum (strain ATCC 12472 / DSM 30191 / JCM 1249 / CCUG 213 / NBRC 12614 / NCIMB 9131 / NCTC 9757 / MK).